An 85-amino-acid polypeptide reads, in one-letter code: Depressant scorpion toxin BmKIM (85 aa).

An N-terminal signal peptide occupies residues 1-21 (MKLFLLLVFFASMLIDGLVNA). The LCN-type CS-alpha/beta domain occupies 22 to 82 (DGYIRGSNGC…TWKSESNTCG (61 aa)). 4 disulfides stabilise this stretch: C31–C81, C35–C56, C42–C63, and C46–C65. Position 82 is a glycine amide (G82).

This sequence belongs to the long (4 C-C) scorpion toxin superfamily. Sodium channel inhibitor family. In terms of tissue distribution, expressed by the venom gland.

Its subcellular location is the secreted. Its function is as follows. Causes a slow progressive depressant flaccid paralysis, when injected into S.falculata blowfly larvae. Inhibits dose-dependently the total sodium (Nav) currents both in dorsal root ganglia neurons and in ventricular myocytes. Is toxic to mice by intravenous injection, but not by subcutaneous or intracerebroventricular injection. Produces antiarrhythmia in rat. Is then active on both mammals and insects. The sequence is that of Depressant scorpion toxin BmKIM (KIM2) from Olivierus martensii (Manchurian scorpion).